A 332-amino-acid polypeptide reads, in one-letter code: Glyceraldehyde-3-phosphate dehydrogenase 1 (332 aa).

Residues 11-12, Asp33, and Arg78 contribute to the NAD(+) site; that span reads RI. Residues 149-151, Thr180, 209-210, and Arg232 each bind D-glyceraldehyde 3-phosphate; these read SCT and TG. The active-site Nucleophile is the Cys150. Asn314 serves as a coordination point for NAD(+).

The protein belongs to the glyceraldehyde-3-phosphate dehydrogenase family. Homotetramer.

The protein resides in the cytoplasm. The catalysed reaction is D-glyceraldehyde 3-phosphate + phosphate + NAD(+) = (2R)-3-phospho-glyceroyl phosphate + NADH + H(+). It participates in carbohydrate degradation; glycolysis; pyruvate from D-glyceraldehyde 3-phosphate: step 1/5. This is Glyceraldehyde-3-phosphate dehydrogenase 1 (GPD1) from Candida glabrata (strain ATCC 2001 / BCRC 20586 / JCM 3761 / NBRC 0622 / NRRL Y-65 / CBS 138) (Yeast).